The sequence spans 356 residues: HTH-type transcriptional regulator AglR (356 aa).

Residues methionine 1–threonine 57 enclose the HTH lacI-type domain. Positions leucine 5–asparagine 24 form a DNA-binding region, H-T-H motif. The tract at residues threonine 337–alanine 356 is disordered.

Functionally, probable regulatory protein for the binding-protein-dependent transport system for alpha-glucosides such as sucrose, maltose and trehalose. This chain is HTH-type transcriptional regulator AglR (aglR), found in Rhizobium meliloti (strain 1021) (Ensifer meliloti).